Here is a 212-residue protein sequence, read N- to C-terminus: Large ribosomal subunit protein bL25 (212 aa).

Residues 1–16 (MKTRIDLTVEPRETGK) are compositionally biased toward basic and acidic residues. A disordered region spans residues 1 to 22 (MKTRIDLTVEPRETGKHNSRGL).

This sequence belongs to the bacterial ribosomal protein bL25 family. CTC subfamily. Part of the 50S ribosomal subunit; part of the 5S rRNA/L5/L18/L25 subcomplex. Contacts the 5S rRNA. Binds to the 5S rRNA independently of L5 and L18.

Functionally, this is one of the proteins that binds to the 5S RNA in the ribosome where it forms part of the central protuberance. The protein is Large ribosomal subunit protein bL25 of Bdellovibrio bacteriovorus (strain ATCC 15356 / DSM 50701 / NCIMB 9529 / HD100).